The following is a 497-amino-acid chain: MALWQQGQKLYLPPTPVSKVLCSETYVQRKSIFYHAETERLLTVGHPYYQVTVGDKTVPKVSANQFRVFKIQLPDPNQFALPDRTVHNPSKERLVWAVIGVQVSRGQPLGGTVTGHPTFNALLDAENVNRKVTAQTTDDRKQTGLDAKQQQILLLGCTPAEGEYWTTARPCVTDRLENGACPPLELKNKHIEDGDMMEIGFGAADFKTLNASKSDLPLDIQNEICLYPDYLKMAEDAAGNSMFFFARKEQVYVRHIWTRGGSEKEAPSKDFYLKNGRGEETLKIPSVHFGSPSGSLVSTDNQIFNRPYWLFRAQGMNNGIAWNNLLFLTVGDNTRGTNLSISVAADGNALSEYDTGKFNLYHRHMEEYKLAFILELCSVEITAQTLSHLQGLMPSVLQNWEIGVQPPASSILEDTYRYIESPATKCASNVIPPKEDPYAGLKFWSIDLKEKLSLDLDQFPLGRRFLAQQGAGCSTVRKRAVATRNSSKPAKRKKIKA.

It belongs to the papillomaviridae L1 protein family. In terms of assembly, self-assembles into homopentamers. The capsid has an icosahedral symmetry and consists of 72 capsomers, with each capsomer being a pentamer of L1. Interacts with the minor capsid protein L2; this interaction is necessary for viral genome encapsidation. Interacts with protein E2; this interaction enhances E2-dependent replication and transcription activation.

It localises to the virion. The protein resides in the host nucleus. Forms an icosahedral capsid with a T=7 symmetry and a 50 nm diameter. The capsid is composed of 72 pentamers linked to each other by disulfide bonds and associated with L2 proteins. Binds to heparan sulfate proteoglycans on cell surface of basal layer keratinocytes to provide initial virion attachment. This binding mediates a conformational change in the virus capsid that facilitates efficient infection. The virion enters the host cell via endocytosis. During virus trafficking, L1 protein dissociates from the viral DNA and the genomic DNA is released to the host nucleus. The virion assembly takes place within the cell nucleus. Encapsulates the genomic DNA together with protein L2. This is Major capsid protein L1 from Bos taurus papillomavirus 2 (Bovine papillomavirus 2).